The following is a 370-amino-acid chain: Pyruvate dehydrogenase E1 component subunit alpha (370 aa).

As to quaternary structure, heterodimer of an alpha and a beta chain. Thiamine diphosphate is required as a cofactor.

The enzyme catalyses N(6)-[(R)-lipoyl]-L-lysyl-[protein] + pyruvate + H(+) = N(6)-[(R)-S(8)-acetyldihydrolipoyl]-L-lysyl-[protein] + CO2. The pyruvate dehydrogenase complex catalyzes the overall conversion of pyruvate to acetyl-CoA and CO(2). It contains multiple copies of three enzymatic components: pyruvate dehydrogenase (E1), dihydrolipoamide acetyltransferase (E2) and lipoamide dehydrogenase (E3). The polypeptide is Pyruvate dehydrogenase E1 component subunit alpha (pdhA) (Staphylococcus aureus (strain COL)).